Reading from the N-terminus, the 326-residue chain is Adenosine receptor A1 (326 aa).

Over 1–10 (MPPYISAFQA) the chain is Extracellular. A helical transmembrane segment spans residues 11–33 (AYIGIEVLIALVSVPGNVLVIWA). The Cytoplasmic segment spans residues 34–46 (VKVNQALRDATFC). The helical transmembrane segment at 47-69 (FIVSLAVADVAVGALVIPLAILI) threads the bilayer. The Extracellular portion of the chain corresponds to 70 to 80 (NIGPQTYFHTC). Cys80 and Cys169 form a disulfide bridge. The helical transmembrane segment at 81-102 (LMVACPVLILTQSSILALLAIA) threads the bilayer. The Cytoplasmic portion of the chain corresponds to 103 to 123 (VDRYLRVKIPLRYKTVVTQRR). Residues 124–146 (AAVAIAGCWILSLVVGLTPMFGW) traverse the membrane as a helical segment. Residues 147 to 176 (NNLSEVEQAWIANGSVGEPVIKCEFEKVIS) lie on the Extracellular side of the membrane. N-linked (GlcNAc...) asparagine glycans are attached at residues Asn148 and Asn159. The chain crosses the membrane as a helical span at residues 177–201 (MEYMVYFNFFVWVLPPLLLMVLIYL). The Cytoplasmic segment spans residues 202–235 (EVFYLIRKQLNKKVSASSGDPQKYYGKELKIAKS). A helical transmembrane segment spans residues 236-259 (LALILFLFALSWLPLHILNCITLF). The Extracellular segment spans residues 260–267 (CPTCQKPS). A helical membrane pass occupies residues 268–292 (ILIYIAIFLTHGNSAMNPIVYAFRI). The Cytoplasmic segment spans residues 293-326 (HKFRVTFLKIWNDHFRCQPKPPIEEDIPEEKADD). The S-palmitoyl cysteine moiety is linked to residue Cys309.

It belongs to the G-protein coupled receptor 1 family.

The protein localises to the cell membrane. Its function is as follows. Receptor for adenosine. The activity of this receptor is mediated by G proteins which inhibit adenylyl cyclase. In Mus musculus (Mouse), this protein is Adenosine receptor A1 (Adora1).